Reading from the N-terminus, the 167-residue chain is Phosphopantetheine adenylyltransferase (167 aa).

T9 lines the substrate pocket. ATP contacts are provided by residues 9 to 10 (TF) and H17. Substrate contacts are provided by K41, L73, and R87. ATP contacts are provided by residues 88-90 (GLR), E98, and 123-129 (YQFISGT).

Belongs to the bacterial CoaD family. Homohexamer. Requires Mg(2+) as cofactor.

The protein resides in the cytoplasm. It carries out the reaction (R)-4'-phosphopantetheine + ATP + H(+) = 3'-dephospho-CoA + diphosphate. It participates in cofactor biosynthesis; coenzyme A biosynthesis; CoA from (R)-pantothenate: step 4/5. Its function is as follows. Reversibly transfers an adenylyl group from ATP to 4'-phosphopantetheine, yielding dephospho-CoA (dPCoA) and pyrophosphate. The sequence is that of Phosphopantetheine adenylyltransferase from Bordetella avium (strain 197N).